The chain runs to 716 residues: Leucine-rich repeat neuronal protein 1 (716 aa).

Residues 1–25 form the signal peptide; that stretch reads MARMSFVLAAYQMVLSLLMTSLTGS. The 47-residue stretch at 26-72 folds into the LRRNT domain; sequence SLQSSECPQLCVCEIRPWFTPQSTYREATTVDCNDLRLTRIPSNLSS. Over 26–631 the chain is Extracellular; sequence SLQSSECPQL…DISDQETSTA (606 aa). Residue Asn69 is glycosylated (N-linked (GlcNAc...) asparagine). LRR repeat units lie at residues 73 to 95, 96 to 117, 120 to 141, 144 to 165, 168 to 189, 192 to 213, 216 to 237, 240 to 261, and 264 to 285; these read DTQVLLLQSNNIAKTVDELQQLF, NLTELDFSQNNFTNIKEVGLAN, QLTTLHLEENQITEMNDYCLQD, NLQELYINHNQISTISANAFSG, NLLRLHLNSNKLKVIDSRWFDS, NLEILMIGENPVIGILDMNFKP, NLRSLVLAGMYLTDIPGNALVG, SLESLSFYDNKLVKVPQLALQK, and NLKFLDLNKNPIHKIQEGDFKN. N-linked (GlcNAc...) asparagine glycans are attached at residues Asn96, Asn106, and Asn117. Residues 371–424 enclose the LRRCT domain; sequence NPLRCDCVIHWINSNKTNIRFMEPLSMFCAMPPEYRGQQVKEVLIQDSSEQCLP. The N-linked (GlcNAc...) asparagine glycan is linked to Asn385. The region spanning 424–515 is the Ig-like C2-type domain; that stretch reads PMISHDTFPN…GADTRVVMIK (92 aa). Cysteines 447 and 499 form a disulfide. Residues Asn517, Asn582, and Asn611 are each glycosylated (N-linked (GlcNAc...) asparagine). A Fibronectin type-III domain is found at 525-617; sequence QVLKIYVKQT…SCVNVTTKNA (93 aa). A helical membrane pass occupies residues 632–652; sequence LAAVMGSMFAVISLASIAVYI. Residues 653–716 are Cytoplasmic-facing; it reads AKRFKRKNYH…VDTSRSYYMW (64 aa). Positions 691 to 700 are enriched in basic and acidic residues; it reads DSEKDKDGTA. Residues 691-716 form a disordered region; that stretch reads DSEKDKDGTADTKPTQVDTSRSYYMW. A compositionally biased stretch (polar residues) spans 702–716; it reads TKPTQVDTSRSYYMW.

It localises to the membrane. This Bos taurus (Bovine) protein is Leucine-rich repeat neuronal protein 1 (LRRN1).